Reading from the N-terminus, the 281-residue chain is MGQKINPHGFRLGITTGWKSRWYADKQYAEYVKEDVAIRRLLSTGLERAGIADVEIERTRDRVRVDIHTARPGIVIGRRGTEADRIRADLEKLTCKQVQLNILEVKNPESQAQLVAQGVAEQLSNRVAFRRAMRKAIQSAMRQPNVKGIRVQCSGRLGGAEMSRSEFYREGRVPLHTLRADIDYGLHEAKTTFGRIGVKVWIYKGDIVGGKREVTAVAPAGAERARRERPSGTRPRRSGAAGTTVTGTDAGRAVGGQESAATNIGHSDDSVVTHEPQIAES.

In terms of domain architecture, KH type-2 spans 38–106; that stretch reads IRRLLSTGLE…QVQLNILEVK (69 aa). The disordered stretch occupies residues 218–281; that stretch reads APAGAERARR…VTHEPQIAES (64 aa). Residues 238–256 are compositionally biased toward low complexity; that stretch reads SGAAGTTVTGTDAGRAVGG.

The protein belongs to the universal ribosomal protein uS3 family. In terms of assembly, part of the 30S ribosomal subunit. Forms a tight complex with proteins S10 and S14.

In terms of biological role, binds the lower part of the 30S subunit head. Binds mRNA in the 70S ribosome, positioning it for translation. The sequence is that of Small ribosomal subunit protein uS3 from Mycobacterium leprae (strain Br4923).